The following is a 280-amino-acid chain: MQEVISYIQKAVLEISNALKFPDTSYSQNQNFTGDTQLKFDVLSDEIITKTLSQCSSIKAIISEEKDEILTLNERANFIVAYDPLDGSSLMDVNFAIGSIFAIYEEKANAKNLRAALYSMYGARLELVICKDQPKLYRLNANNEFIFIKDLKMNEKGKINATGGTQKFWEEKHAKFIKNLFDEGYRLRYSGAMVSDINQILLKGGGIFSYPATQDAPNGKLRAFFEVFPLAFIIEKAGGKTTNGKNRSLLELEFDKIHATTPCFFGSEYEISKLLKAYNE.

Mg(2+)-binding residues include E64, D83, L85, and D86. Substrate contacts are provided by residues 86 to 89 (DGSS), Y189, and K220. E226 lines the Mg(2+) pocket.

Belongs to the FBPase class 1 family. As to quaternary structure, homotetramer. Requires Mg(2+) as cofactor.

The protein resides in the cytoplasm. The enzyme catalyses beta-D-fructose 1,6-bisphosphate + H2O = beta-D-fructose 6-phosphate + phosphate. The protein operates within carbohydrate biosynthesis; gluconeogenesis. This is Fructose-1,6-bisphosphatase class 1 from Campylobacter jejuni (strain RM1221).